The primary structure comprises 515 residues: 1-pyrroline-5-carboxylate dehydrogenase (515 aa).

Catalysis depends on residues glutamate 286 and cysteine 320.

Belongs to the aldehyde dehydrogenase family. RocA subfamily.

The catalysed reaction is L-glutamate 5-semialdehyde + NAD(+) + H2O = L-glutamate + NADH + 2 H(+). It functions in the pathway amino-acid degradation; L-proline degradation into L-glutamate; L-glutamate from L-proline: step 2/2. The polypeptide is 1-pyrroline-5-carboxylate dehydrogenase (Bacillus cytotoxicus (strain DSM 22905 / CIP 110041 / 391-98 / NVH 391-98)).